The following is a 313-amino-acid chain: Mitochondrial uncoupling protein 4 (313 aa).

3 Solcar repeats span residues lysine 4–lysine 115, leucine 124–glycine 215, and aspartate 224–leucine 309. 6 consecutive transmembrane segments (helical) span residues phenylalanine 6–isoleucine 26, alanine 84–threonine 104, isoleucine 130–alanine 150, arginine 189–tyrosine 209, valine 230–isoleucine 250, and tyrosine 282–threonine 302.

This sequence belongs to the mitochondrial carrier (TC 2.A.29) family. Expressed in roots, leaves, stems and flowers.

Its subcellular location is the mitochondrion inner membrane. In terms of biological role, PUMPS are mitochondrial transporter proteins that create proton leaks across the inner mitochondrial membrane, thus uncoupling oxidative phosphorylation. This leads to a decrease in the efficiency of oxidative phosphorylation and an increase in heat production. May be involved in protecting plant cells against oxidative stress damage. Recombinant PUMP4, reconstituted into liposomes, transports a wide range of dicarboxylic acids including malate, oxaloacetate and succinate as well as phosphate, sulfate and thiosulfate. However, it is unknown if these transports are of any biological significance in vivo. In Arabidopsis thaliana (Mouse-ear cress), this protein is Mitochondrial uncoupling protein 4 (PUMP4).